The sequence spans 290 residues: Putative phosphatase MPN_427 (290 aa).

Asp-16 (nucleophile) is an active-site residue. Asp-16 is a Mg(2+) binding site. Leu-17 serves as a coordination point for phosphate. Residue Asp-18 participates in Mg(2+) binding. Phosphate is bound by residues 53–54 (TG) and Lys-216. 2 residues coordinate Mg(2+): Asp-239 and Ser-240. Asn-242 provides a ligand contact to phosphate.

The protein belongs to the HAD-like hydrolase superfamily. Cof family. Mg(2+) serves as cofactor.

The polypeptide is Putative phosphatase MPN_427 (Mycoplasma pneumoniae (strain ATCC 29342 / M129 / Subtype 1) (Mycoplasmoides pneumoniae)).